Consider the following 504-residue polypeptide: Maturase K (504 aa).

The protein belongs to the intron maturase 2 family. MatK subfamily.

The protein resides in the plastid. Its subcellular location is the chloroplast. Functionally, usually encoded in the trnK tRNA gene intron. Probably assists in splicing its own and other chloroplast group II introns. This chain is Maturase K, found in Aucuba japonica (Japanese laurel).